The following is a 601-amino-acid chain: Proline--tRNA ligase (601 aa).

This sequence belongs to the class-II aminoacyl-tRNA synthetase family. ProS type 1 subfamily. Homodimer.

Its subcellular location is the cytoplasm. The enzyme catalyses tRNA(Pro) + L-proline + ATP = L-prolyl-tRNA(Pro) + AMP + diphosphate. Functionally, catalyzes the attachment of proline to tRNA(Pro) in a two-step reaction: proline is first activated by ATP to form Pro-AMP and then transferred to the acceptor end of tRNA(Pro). As ProRS can inadvertently accommodate and process non-cognate amino acids such as alanine and cysteine, to avoid such errors it has two additional distinct editing activities against alanine. One activity is designated as 'pretransfer' editing and involves the tRNA(Pro)-independent hydrolysis of activated Ala-AMP. The other activity is designated 'posttransfer' editing and involves deacylation of mischarged Ala-tRNA(Pro). The misacylated Cys-tRNA(Pro) is not edited by ProRS. The chain is Proline--tRNA ligase from Picosynechococcus sp. (strain ATCC 27264 / PCC 7002 / PR-6) (Agmenellum quadruplicatum).